Reading from the N-terminus, the 734-residue chain is MSVTIDAQLAQSFGLTGEEYDKLVTIMGRTPSFTELGIFSVMWSEHCSYKSSRIHLKTLPTKAPWVIHGPGENAGVVDIGEGLAAVFKMESHNHPSFIEPYQGAATGVGGILRDVFTMGARPVANLNALRFGDPKHAGTRRIVDGVVRGVGGYGNCVGVPTVGGEVNFHKAYDGNPLVNAMTVGVAKQDKIFLSAAAGVGNPVVYVGSKTGRDGIHGATMSSAEFDEEAASKRPTVQVGDPFIEKLLIEACLELMATDAIVAIQDMGAAGLTSSAVEMAGKGGVGIELNLDAVPQREPNMSAYEMMLSESQERMLMVLKPERTEVARAIFAKWELDFAVIGELTDTGRITIRHKGEVEADIPLAPLADEAPVYNRPTVPLKAPARIETPADPEGIEKALLTLVGCPDLASRAWVWNQYDGSVGGNTARRPGAADAAVVRVEGTRLGLALTTDCTPRYCQADPKTGGAQAVAEAWRNITATGATPLAVTDNLNFGNPERPEIMAQFADAIKGMGDACRALDFPVVSGNVSLYNETRSPSGEAQAILPTPAIGALGVLADASKSIGLAMPDAHDLVLVGGIRGELGQSLWLREICQREDGAPPVVDLAVERRNGDFVRSQIGAGAVAACHDIADGGLLVTVAEMVMASGVGCTLEAAPTDVAAHAFWFGEDQGCYVIATSDGAALVAAAEKANVLAMRLGRSGGTDLELPGTVRVSAERLREINAAFFPRFMGEGA.

Histidine 46 is an active-site residue. Positions 49 and 88 each coordinate ATP. Residue glutamate 90 coordinates Mg(2+). Residues 91–94 (SHNH) and arginine 113 contribute to the substrate site. Histidine 92 acts as the Proton acceptor in catalysis. Aspartate 114 contacts Mg(2+). Glutamine 237 is a binding site for substrate. Aspartate 265 lines the Mg(2+) pocket. 309 to 311 (ESQ) provides a ligand contact to substrate. 2 residues coordinate ATP: aspartate 489 and glycine 526. Asparagine 527 is a binding site for Mg(2+). Serine 529 provides a ligand contact to substrate.

This sequence belongs to the FGAMS family. In terms of assembly, monomer. Part of the FGAM synthase complex composed of 1 PurL, 1 PurQ and 2 PurS subunits.

It localises to the cytoplasm. The catalysed reaction is N(2)-formyl-N(1)-(5-phospho-beta-D-ribosyl)glycinamide + L-glutamine + ATP + H2O = 2-formamido-N(1)-(5-O-phospho-beta-D-ribosyl)acetamidine + L-glutamate + ADP + phosphate + H(+). The protein operates within purine metabolism; IMP biosynthesis via de novo pathway; 5-amino-1-(5-phospho-D-ribosyl)imidazole from N(2)-formyl-N(1)-(5-phospho-D-ribosyl)glycinamide: step 1/2. In terms of biological role, part of the phosphoribosylformylglycinamidine synthase complex involved in the purines biosynthetic pathway. Catalyzes the ATP-dependent conversion of formylglycinamide ribonucleotide (FGAR) and glutamine to yield formylglycinamidine ribonucleotide (FGAM) and glutamate. The FGAM synthase complex is composed of three subunits. PurQ produces an ammonia molecule by converting glutamine to glutamate. PurL transfers the ammonia molecule to FGAR to form FGAM in an ATP-dependent manner. PurS interacts with PurQ and PurL and is thought to assist in the transfer of the ammonia molecule from PurQ to PurL. The chain is Phosphoribosylformylglycinamidine synthase subunit PurL from Gluconobacter oxydans (strain 621H) (Gluconobacter suboxydans).